The sequence spans 245 residues: Triosephosphate isomerase (245 aa).

Substrate is bound at residue 9–11 (NWK). His-92 functions as the Electrophile in the catalytic mechanism. Glu-164 (proton acceptor) is an active-site residue. Residues Gly-170, Ser-209, and 230–231 (GG) each bind substrate.

Belongs to the triosephosphate isomerase family. As to quaternary structure, homodimer.

The protein localises to the cytoplasm. It carries out the reaction D-glyceraldehyde 3-phosphate = dihydroxyacetone phosphate. Its pathway is carbohydrate biosynthesis; gluconeogenesis. It functions in the pathway carbohydrate degradation; glycolysis; D-glyceraldehyde 3-phosphate from glycerone phosphate: step 1/1. Its function is as follows. Involved in the gluconeogenesis. Catalyzes stereospecifically the conversion of dihydroxyacetone phosphate (DHAP) to D-glyceraldehyde-3-phosphate (G3P). The polypeptide is Triosephosphate isomerase (Cupriavidus necator (strain ATCC 17699 / DSM 428 / KCTC 22496 / NCIMB 10442 / H16 / Stanier 337) (Ralstonia eutropha)).